A 369-amino-acid chain; its full sequence is 3-dehydroquinate synthase (369 aa).

NAD(+)-binding positions include 72–77, 130–131, Lys-142, and Lys-151; these read SGEKEK and TT. Positions 184, 247, and 264 each coordinate Zn(2+).

This sequence belongs to the sugar phosphate cyclases superfamily. Dehydroquinate synthase family. It depends on Co(2+) as a cofactor. Zn(2+) serves as cofactor. The cofactor is NAD(+).

It is found in the cytoplasm. It catalyses the reaction 7-phospho-2-dehydro-3-deoxy-D-arabino-heptonate = 3-dehydroquinate + phosphate. It functions in the pathway metabolic intermediate biosynthesis; chorismate biosynthesis; chorismate from D-erythrose 4-phosphate and phosphoenolpyruvate: step 2/7. In terms of biological role, catalyzes the conversion of 3-deoxy-D-arabino-heptulosonate 7-phosphate (DAHP) to dehydroquinate (DHQ). This chain is 3-dehydroquinate synthase, found in Bacillus cytotoxicus (strain DSM 22905 / CIP 110041 / 391-98 / NVH 391-98).